The sequence spans 816 residues: Transducer protein Htr18 (816 aa).

2 consecutive transmembrane segments (helical) span residues 21–41 (VVIV…TQAV) and 282–302 (NIVV…LVIG). Positions 303-356 (RDALTALTDMSDRAEAIAAGDIDTAIEETTRIDEVGDLRRSFRDIQEYLQTVAG) constitute an HAMP 1 domain. Residues 399–425 (DAQETAEQSRKEAEQSREEAEALAAAL) form a disordered region. Basic and acidic residues predominate over residues 405–418 (EQSRKEAEQSREEA). Positions 423–476 (AALESQAQDIRETVEHAADGDLTQRLETDTDHESMAAIATALNSLLEELEGTIH) constitute an HAMP 2 domain. One can recognise a Methyl-accepting transducer domain in the interval 495–731 (SAEEVKRASG…EVVTMVDEVG (237 aa)). Residues 790-816 (GGAENTTGAFVRSASTDHSRDATHHDT) form a disordered region. The segment covering 793–803 (ENTTGAFVRSA) has biased composition (polar residues). Residues 804 to 816 (STDHSRDATHHDT) are compositionally biased toward basic and acidic residues.

Belongs to the methyl-accepting chemotaxis (MCP) protein family. Post-translationally, methylated by CheR.

Its subcellular location is the cell membrane. Its function is as follows. Potentially involved in chemo- or phototactic signal transduction. This Halobacterium salinarum (strain ATCC 29341 / DSM 671 / R1) protein is Transducer protein Htr18 (htr18).